The chain runs to 224 residues: Cytochrome c oxidase subunit 2 (224 aa).

The Mitochondrial intermembrane segment spans residues M1–H26. Residues A27–N48 traverse the membrane as a helical segment. The Mitochondrial matrix portion of the chain corresponds to T49–E62. The chain crosses the membrane as a helical span at residues T63 to R82. Residues L83 to N224 are Mitochondrial intermembrane-facing. The Cu cation site is built by H161, C196, E198, C200, H204, and M207. Residue E198 coordinates Mg(2+).

This sequence belongs to the cytochrome c oxidase subunit 2 family. As to quaternary structure, component of the cytochrome c oxidase (complex IV, CIV), a multisubunit enzyme composed of a catalytic core of 3 subunits and several supernumerary subunits. The complex exists as a monomer or a dimer and forms supercomplexes (SCs) in the inner mitochondrial membrane with ubiquinol-cytochrome c oxidoreductase (cytochrome b-c1 complex, complex III, CIII). Cu cation is required as a cofactor.

The protein localises to the mitochondrion inner membrane. The enzyme catalyses 4 Fe(II)-[cytochrome c] + O2 + 8 H(+)(in) = 4 Fe(III)-[cytochrome c] + 2 H2O + 4 H(+)(out). Its function is as follows. Component of the cytochrome c oxidase, the last enzyme in the mitochondrial electron transport chain which drives oxidative phosphorylation. The respiratory chain contains 3 multisubunit complexes succinate dehydrogenase (complex II, CII), ubiquinol-cytochrome c oxidoreductase (cytochrome b-c1 complex, complex III, CIII) and cytochrome c oxidase (complex IV, CIV), that cooperate to transfer electrons derived from NADH and succinate to molecular oxygen, creating an electrochemical gradient over the inner membrane that drives transmembrane transport and the ATP synthase. Cytochrome c oxidase is the component of the respiratory chain that catalyzes the reduction of oxygen to water. Electrons originating from reduced cytochrome c in the intermembrane space (IMS) are transferred via the dinuclear copper A center (CU(A)) of subunit 2 and heme A of subunit 1 to the active site in subunit 1, a binuclear center (BNC) formed by heme A3 and copper B (CU(B)). The BNC reduces molecular oxygen to 2 water molecules using 4 electrons from cytochrome c in the IMS and 4 protons from the mitochondrial matrix. This chain is Cytochrome c oxidase subunit 2 (COII), found in Albinaria caerulea (Land snail).